A 301-amino-acid chain; its full sequence is Eukaryotic translation initiation factor 3 subunit F (301 aa).

The region spanning 32–169 is the MPN domain; that stretch reads VHVHPVALFS…IKSYISSPLG (138 aa).

Belongs to the eIF-3 subunit F family. As to quaternary structure, component of the eukaryotic translation initiation factor 3 (eIF-3) complex.

It localises to the cytoplasm. Component of the eukaryotic translation initiation factor 3 (eIF-3) complex, which is involved in protein synthesis of a specialized repertoire of mRNAs and, together with other initiation factors, stimulates binding of mRNA and methionyl-tRNAi to the 40S ribosome. The eIF-3 complex specifically targets and initiates translation of a subset of mRNAs involved in cell proliferation. This chain is Eukaryotic translation initiation factor 3 subunit F, found in Mycosarcoma maydis (Corn smut fungus).